A 323-amino-acid polypeptide reads, in one-letter code: MMVPSLALVPGEPAGIGPELCVRLAQQPRSDAHLIAYADPDTLHSAATALSLPVRLLEPDQPARAPGDLPLHPIRQAVATRFGAPDPANAAAVIAGLRSAAADCLAGRLQGIVTGPVHKAAINAGGIAYTGTTELLAEQAGCPVVMMLANSIVRVALVTTHLPLRAVADAITADALLQCLRITHAAMQRDFGLEHPRIAVLGLNPHAGEDGHLGREELDIVIPALEQLRGEGMQLIGPLPADTAFLPQKLRGFDAVVAMYHDQGLPVLKYSGFEQAVNITLGLPYPRVAVDHGTALELAGRGIADPSSLMAATALCARLAARR.

Threonine 133 contacts substrate. Residues histidine 161, histidine 206, and histidine 261 each coordinate a divalent metal cation. Substrate contacts are provided by lysine 269, asparagine 278, and arginine 287.

This sequence belongs to the PdxA family. Homodimer. Zn(2+) is required as a cofactor. Requires Mg(2+) as cofactor. It depends on Co(2+) as a cofactor.

It localises to the cytoplasm. It catalyses the reaction 4-(phosphooxy)-L-threonine + NAD(+) = 3-amino-2-oxopropyl phosphate + CO2 + NADH. Its pathway is cofactor biosynthesis; pyridoxine 5'-phosphate biosynthesis; pyridoxine 5'-phosphate from D-erythrose 4-phosphate: step 4/5. Catalyzes the NAD(P)-dependent oxidation of 4-(phosphooxy)-L-threonine (HTP) into 2-amino-3-oxo-4-(phosphooxy)butyric acid which spontaneously decarboxylates to form 3-amino-2-oxopropyl phosphate (AHAP). In Xanthomonas axonopodis pv. citri (strain 306), this protein is 4-hydroxythreonine-4-phosphate dehydrogenase.